We begin with the raw amino-acid sequence, 151 residues long: Transcriptional regulator MraZ (151 aa).

2 SpoVT-AbrB domains span residues isoleucine 5–glutamate 52 and alanine 81–glutamate 124.

The protein belongs to the MraZ family. Forms oligomers.

The protein localises to the cytoplasm. Its subcellular location is the nucleoid. This Marinomonas sp. (strain MWYL1) protein is Transcriptional regulator MraZ.